Here is a 334-residue protein sequence, read N- to C-terminus: Phosphate acyltransferase (334 aa).

It belongs to the PlsX family. Homodimer. Probably interacts with PlsY.

The protein resides in the cytoplasm. The catalysed reaction is a fatty acyl-[ACP] + phosphate = an acyl phosphate + holo-[ACP]. Its pathway is lipid metabolism; phospholipid metabolism. Catalyzes the reversible formation of acyl-phosphate (acyl-PO(4)) from acyl-[acyl-carrier-protein] (acyl-ACP). This enzyme utilizes acyl-ACP as fatty acyl donor, but not acyl-CoA. This is Phosphate acyltransferase from Clostridium kluyveri (strain NBRC 12016).